The chain runs to 917 residues: Bifunctional aspartokinase/homoserine dehydrogenase 2, chloroplastic (917 aa).

The N-terminal 89 residues, 1–89 (MQGLAVSCQL…EVNTYLPKGD (89 aa)), are a transit peptide targeting the chloroplast. The segment at 90-338 (MWSVHKFGGT…VSEAVILSTL (249 aa)) is aspartokinase. Residues 339–563 (SYQEAWEMSY…LSKTTLAVGI (225 aa)) are interface. ACT domains lie at 413-488 (VEGT…VING) and 494-571 (AVGL…LIGG). Residues 564-917 (IGPGLIGGAL…RLASYLGAPS (354 aa)) form a homoserine dehydrogenase region. NAD(+) contacts are provided by I569 and T650. NADP(+) contacts are provided by I569, T650, and K674. NADPH is bound by residues I569, T650, and K674. Positions 701, 704, 706, and 708 each coordinate Na(+). 2 residues coordinate NADP(+): G759 and E762. Residues E762 and D773 each coordinate L-homoserine. The Proton donor role is filled by K777. G894 lines the NAD(+) pocket. NADP(+) is bound at residue G894. G894 is an NADPH binding site.

It in the N-terminal section; belongs to the aspartokinase family. This sequence in the C-terminal section; belongs to the homoserine dehydrogenase family. As to quaternary structure, homo- or heterodimer. Requires a metal cation as cofactor.

It is found in the plastid. Its subcellular location is the chloroplast. It catalyses the reaction L-homoserine + NADP(+) = L-aspartate 4-semialdehyde + NADPH + H(+). The catalysed reaction is L-homoserine + NAD(+) = L-aspartate 4-semialdehyde + NADH + H(+). It carries out the reaction L-aspartate + ATP = 4-phospho-L-aspartate + ADP. The protein operates within amino-acid biosynthesis; L-lysine biosynthesis via DAP pathway; (S)-tetrahydrodipicolinate from L-aspartate: step 1/4. Its pathway is amino-acid biosynthesis; L-methionine biosynthesis via de novo pathway; L-homoserine from L-aspartate: step 1/3. It functions in the pathway amino-acid biosynthesis; L-methionine biosynthesis via de novo pathway; L-homoserine from L-aspartate: step 3/3. It participates in amino-acid biosynthesis; L-threonine biosynthesis; L-threonine from L-aspartate: step 1/5. The protein operates within amino-acid biosynthesis; L-threonine biosynthesis; L-threonine from L-aspartate: step 3/5. In terms of biological role, bifunctional aspartate kinase and homoserine dehydrogenase that catalyzes the first and the third steps toward the synthesis of lysine, methionine and threonine from aspartate. The polypeptide is Bifunctional aspartokinase/homoserine dehydrogenase 2, chloroplastic (AKHSDH2) (Zea mays (Maize)).